The chain runs to 343 residues: Squamosa promoter-binding-like protein 11 (343 aa).

Positions 1–48 (MECNPVSSTTSSSLLWDWDATASAEPPPPPGKRGGRDSSSASASAKRG) are disordered. Composition is skewed to low complexity over residues 7-19 (SSTT…WDWD) and 37-48 (DSSSASASAKRG). The SBP-type zinc finger occupies 64 to 141 (APRCQVEGCG…SDHNARRRKP (78 aa)). Zn(2+) contacts are provided by cysteine 67, cysteine 72, cysteine 89, histidine 92, cysteine 108, cysteine 111, histidine 115, and cysteine 127. The short motif at 124 to 140 (KRSCRRRLSDHNARRRK) is the Bipartite nuclear localization signal element.

As to expression, expressed in stems, leaf sheaths, and young panicles.

Its subcellular location is the nucleus. Functionally, trans-acting factor that binds specifically to the consensus nucleotide sequence 5'-TNCGTACAA-3'. May be involved in panicle development. The protein is Squamosa promoter-binding-like protein 11 (SPL11) of Oryza sativa subsp. japonica (Rice).